The following is a 393-amino-acid chain: NAD(P)H-quinone oxidoreductase subunit H, chloroplastic (393 aa).

Belongs to the complex I 49 kDa subunit family. As to quaternary structure, NDH is composed of at least 16 different subunits, 5 of which are encoded in the nucleus.

Its subcellular location is the plastid. It is found in the chloroplast thylakoid membrane. It carries out the reaction a plastoquinone + NADH + (n+1) H(+)(in) = a plastoquinol + NAD(+) + n H(+)(out). It catalyses the reaction a plastoquinone + NADPH + (n+1) H(+)(in) = a plastoquinol + NADP(+) + n H(+)(out). NDH shuttles electrons from NAD(P)H:plastoquinone, via FMN and iron-sulfur (Fe-S) centers, to quinones in the photosynthetic chain and possibly in a chloroplast respiratory chain. The immediate electron acceptor for the enzyme in this species is believed to be plastoquinone. Couples the redox reaction to proton translocation, and thus conserves the redox energy in a proton gradient. This chain is NAD(P)H-quinone oxidoreductase subunit H, chloroplastic, found in Olimarabidopsis pumila (Dwarf rocket).